A 557-amino-acid polypeptide reads, in one-letter code: Warthog protein 4 (557 aa).

The N-terminal stretch at Met1–Gly20 is a signal peptide. The tract at residues Gln272–Gln308 is disordered. Residues Gly287 to Gln308 show a composition bias toward low complexity.

The protein belongs to the hedgehog family. Post-translationally, the C-terminal domain displays an autoproteolysis activity.

Its subcellular location is the secreted. The protein resides in the cell surface. It is found in the cell membrane. The protein localises to the extracellular space. Its function is as follows. Intercellular signal essential for a variety of patterning events during development. This Caenorhabditis elegans protein is Warthog protein 4 (wrt-4).